A 779-amino-acid chain; its full sequence is MSKTQKTTVKAKKAKRIPVIELVEAISSKNLKRLLSAEGLDEVTRIQLSLYYRKIFKTTSNPLNNDEVGFIKVKYFHSDKLEDTGRVYAEKGRSLQSFKKAIRAFINNGINLDIDMKNSHPTLITQYCKKNKILCPFLDDYVRRREKRLEDVMVFHKISRDQAKELILRLCYLGSYKIPNDDGTSYKPKKTLEFLEKFKEEAEIIADRIAKKEKELYAKIKDNDDCKNKKAVILSVLAQQLEHSCLMEMYNFFTSKKIRVSTLCFDGMLINGINGNISDLLRECENFVYEQINYKINLEEKPMEHKLKFEVPIFSDYVDSDSDCQIKLFELVGKNKFKFCNGVLWVFDDQTGMFENSNHVVFRYLKRYKEYFNFIISTDDDGNHKTKNYATDEVLRKKIIGFIKDECQDNEWMLKTQTSSLGYLLFKDGIYNFNTSTFTEGFDPNIVFKFRVPWKFPKYDKELIKKAYKLSFGALFDNPKPFITSLACALAGEIKLKKIYFCPGKSNAGKSYLIKMLQYCFGDYIGTINGENISYNSKDSRDEAAKYRWAYLLANTRIVMSSEISMKKSIDGNMIKKFASAGDKIVGRKHCESEISFTPNFTIFCMFNDIPEIEPHDEAVSNRLVYHEFPYVFVKEEELNEKPYNKLKDEDLDSKYQTKDFASGFIHILLDAYKNYLENGLPEFDNEVKEKWTAQTKQIDKVTSIINEYYEVTNNVKDFVPLNEILKFKEQHKDLKTISKNRFNEILVEELKLKEGRSAKLRYWSGLKKRHFGDDINFE.

Residues 477-642 form the SF3 helicase domain; that stretch reads DNPKPFITSL…FVKEEELNEK (166 aa). 504–511 provides a ligand contact to ATP; the sequence is GKSNAGKS.

This Acanthamoeba polyphaga (Amoeba) protein is Putative helicase V13.